Reading from the N-terminus, the 337-residue chain is Inositol 2-dehydrogenase (337 aa).

The protein belongs to the Gfo/Idh/MocA family. Homotetramer.

It carries out the reaction myo-inositol + NAD(+) = scyllo-inosose + NADH + H(+). Functionally, involved in the oxidation of myo-inositol (MI) to 2-keto-myo-inositol (2KMI or 2-inosose). This Serratia proteamaculans (strain 568) protein is Inositol 2-dehydrogenase.